Consider the following 229-residue polypeptide: MAKLLLFLLPAILGLLIPRSAVALGTNYLLSGQTLNTDGHLKNGDFDLVMQNDCNLVLYNGNWQSNTANNGRDCKLTLTDYGDLVIKNRDGSTVWRSRAKSVKGNYAAVLHPDGRLVVFGPSVFKNDPWVPGLNSLAFRNIPFTDNLLFSPQVLYGDGRLTAKNHQLVMQGDCNLVLYGGKYGWQSNTHGNGEHCFLRLNHKGELIIKDDDFKTIWSSSSSSKQGDYVL.

Residues 1 to 23 form the signal peptide; that stretch reads MAKLLLFLLPAILGLLIPRSAVA. Bulb-type lectin domains are found at residues 26-131 and 145-229; these read TNYL…PWVP and DNLL…DYVL. Residues 51 to 55, Tyr59, Trp63, Gln64, 170 to 174, Tyr178, and 182 to 185 contribute to the beta-D-mannose site; these read QNDCN, QGDCN, and YGWQ. The short motif at 51–59 is the Carbohydrate-binding motif 1 element; the sequence is QNDCNLVLY. Disulfide bonds link Cys54-Cys74 and Cys173-Cys195. Residues 170–178 carry the Carbohydrate-binding motif 2 motif; sequence QGDCNLVLY.

In terms of assembly, forms heterotetramer of 2 chains 1 and 2 chains 2 arranged as a dimer of chain 1 and chain 2 heterodimers.

The protein resides in the secreted. Mannose-specific lectin. Shows agglutinating activity towards erythrocytes from rabbit. The chain is Mannose-specific lectin TAR1 from Colocasia esculenta (Wild taro).